The chain runs to 276 residues: Bis(5'-nucleosyl)-tetraphosphatase, symmetrical (276 aa).

Belongs to the Ap4A hydrolase family.

It catalyses the reaction P(1),P(4)-bis(5'-adenosyl) tetraphosphate + H2O = 2 ADP + 2 H(+). Hydrolyzes diadenosine 5',5'''-P1,P4-tetraphosphate to yield ADP. The polypeptide is Bis(5'-nucleosyl)-tetraphosphatase, symmetrical (Neisseria gonorrhoeae (strain ATCC 700825 / FA 1090)).